Here is a 160-residue protein sequence, read N- to C-terminus: Transcription antitermination protein NusB (160 aa).

Belongs to the NusB family.

Functionally, involved in transcription antitermination. Required for transcription of ribosomal RNA (rRNA) genes. Binds specifically to the boxA antiterminator sequence of the ribosomal RNA (rrn) operons. The chain is Transcription antitermination protein NusB from Rhizobium meliloti (strain 1021) (Ensifer meliloti).